The primary structure comprises 429 residues: Adenylosuccinate synthetase (429 aa).

GTP-binding positions include 12-18 (GDEGKGK) and 40-42 (GHT). Residue Asp13 is the Proton acceptor of the active site. Residues Asp13 and Gly40 each coordinate Mg(2+). IMP is bound by residues 13–16 (DEGK), 38–41 (NAGH), Thr128, Arg142, Gln223, Thr238, and Arg302. The active-site Proton donor is His41. Substrate is bound at residue 298–304 (TVTGRPR). GTP-binding positions include Arg304, 330–332 (LLD), and 412–414 (SVG).

This sequence belongs to the adenylosuccinate synthetase family. Homodimer. Requires Mg(2+) as cofactor.

It is found in the cytoplasm. The catalysed reaction is IMP + L-aspartate + GTP = N(6)-(1,2-dicarboxyethyl)-AMP + GDP + phosphate + 2 H(+). It functions in the pathway purine metabolism; AMP biosynthesis via de novo pathway; AMP from IMP: step 1/2. Functionally, plays an important role in the de novo pathway of purine nucleotide biosynthesis. Catalyzes the first committed step in the biosynthesis of AMP from IMP. The protein is Adenylosuccinate synthetase of Lactobacillus gasseri (strain ATCC 33323 / DSM 20243 / BCRC 14619 / CIP 102991 / JCM 1131 / KCTC 3163 / NCIMB 11718 / NCTC 13722 / AM63).